A 313-amino-acid polypeptide reads, in one-letter code: MLDNVLRIATRQSPLALWQAHYVKDKLMASHPGLVVELVPMVTRGDVILDTPLAKVGGKGLFVKELEVALLENRADIAVHSMKDVPVEFPQGLGLVTICEREDPRDAFVSNNYDNLDALPAGSIVGTSSLRRQCQLAERRPDLIIRSLRGNVGTRLSKLDNGEYDAIILAVAGLKRLGLESRIRAALPPEISLPAVGQGAVGIECRLDDTRTRELLAALNHHETALRVTAERAMNTRLEGGCQVPIGSYAELIDGEIWLRALVGAPDGSQIIRGERRGAPQDAEQMGISLAEELLNNGAREILAEVYNGDAPA.

An S-(dipyrrolylmethanemethyl)cysteine modification is found at cysteine 242.

This sequence belongs to the HMBS family. As to quaternary structure, monomer. Dipyrromethane is required as a cofactor.

It carries out the reaction 4 porphobilinogen + H2O = hydroxymethylbilane + 4 NH4(+). It functions in the pathway porphyrin-containing compound metabolism; protoporphyrin-IX biosynthesis; coproporphyrinogen-III from 5-aminolevulinate: step 2/4. In terms of biological role, tetrapolymerization of the monopyrrole PBG into the hydroxymethylbilane pre-uroporphyrinogen in several discrete steps. In Escherichia coli O7:K1 (strain IAI39 / ExPEC), this protein is Porphobilinogen deaminase.